A 92-amino-acid chain; its full sequence is Small ribosomal subunit protein uS19c (92 aa).

It belongs to the universal ribosomal protein uS19 family.

The protein localises to the plastid. Its subcellular location is the chloroplast. Protein S19 forms a complex with S13 that binds strongly to the 16S ribosomal RNA. The protein is Small ribosomal subunit protein uS19c of Calycanthus floridus var. glaucus (Eastern sweetshrub).